Consider the following 349-residue polypeptide: GTP 3',8-cyclase (349 aa).

The 226-residue stretch at 24–249 (PFGRAVTYLR…KDMSYRTGGP (226 aa)) folds into the Radical SAM core domain. GTP is bound at residue Arg33. [4Fe-4S] cluster is bound by residues Cys40 and Cys44. Tyr46 is a binding site for S-adenosyl-L-methionine. Position 47 (Cys47) interacts with [4Fe-4S] cluster. Position 82 (Arg82) interacts with GTP. Gly86 is an S-adenosyl-L-methionine binding site. Thr116 is a binding site for GTP. Residue Ser140 participates in S-adenosyl-L-methionine binding. Lys176 lines the GTP pocket. Met210 is an S-adenosyl-L-methionine binding site. The [4Fe-4S] cluster site is built by Cys273 and Cys276. 278–280 (RVR) serves as a coordination point for GTP. Cys290 contacts [4Fe-4S] cluster.

It belongs to the radical SAM superfamily. MoaA family. In terms of assembly, monomer and homodimer. The cofactor is [4Fe-4S] cluster.

It carries out the reaction GTP + AH2 + S-adenosyl-L-methionine = (8S)-3',8-cyclo-7,8-dihydroguanosine 5'-triphosphate + 5'-deoxyadenosine + L-methionine + A + H(+). The protein operates within cofactor biosynthesis; molybdopterin biosynthesis. Catalyzes the cyclization of GTP to (8S)-3',8-cyclo-7,8-dihydroguanosine 5'-triphosphate. The sequence is that of GTP 3',8-cyclase from Sinorhizobium medicae (strain WSM419) (Ensifer medicae).